The chain runs to 253 residues: Ubiquinone/menaquinone biosynthesis C-methyltransferase UbiE (253 aa).

Residues T76, D97, and 125 to 126 contribute to the S-adenosyl-L-methionine site; that span reads NA.

This sequence belongs to the class I-like SAM-binding methyltransferase superfamily. MenG/UbiE family.

The enzyme catalyses a 2-demethylmenaquinol + S-adenosyl-L-methionine = a menaquinol + S-adenosyl-L-homocysteine + H(+). It carries out the reaction a 2-methoxy-6-(all-trans-polyprenyl)benzene-1,4-diol + S-adenosyl-L-methionine = a 5-methoxy-2-methyl-3-(all-trans-polyprenyl)benzene-1,4-diol + S-adenosyl-L-homocysteine + H(+). The protein operates within quinol/quinone metabolism; menaquinone biosynthesis; menaquinol from 1,4-dihydroxy-2-naphthoate: step 2/2. Its pathway is cofactor biosynthesis; ubiquinone biosynthesis. Its function is as follows. Methyltransferase required for the conversion of demethylmenaquinol (DMKH2) to menaquinol (MKH2) and the conversion of 2-polyprenyl-6-methoxy-1,4-benzoquinol (DDMQH2) to 2-polyprenyl-3-methyl-6-methoxy-1,4-benzoquinol (DMQH2). The protein is Ubiquinone/menaquinone biosynthesis C-methyltransferase UbiE of Rhodopseudomonas palustris (strain ATCC BAA-98 / CGA009).